The chain runs to 124 residues: UPF0344 protein BH2983 (124 aa).

4 consecutive transmembrane segments (helical) span residues 15–35 (GSWAILIILFLVSYFLIKAGK), 40–60 (KILHMIVRLFFVIMLITGAGM), 61–81 (LVYWQFAFLFIVKGVLAIVLI), and 102–122 (IYWIVFITCLVLVALIGYNVI).

The protein belongs to the UPF0344 family.

Its subcellular location is the cell membrane. The polypeptide is UPF0344 protein BH2983 (Halalkalibacterium halodurans (strain ATCC BAA-125 / DSM 18197 / FERM 7344 / JCM 9153 / C-125) (Bacillus halodurans)).